The sequence spans 136 residues: Acyl carrier protein 2, chloroplastic (136 aa).

The N-terminal 51 residues, 1-51 (MASIAASASISLQARPRQLAIAASQVKSFSNGRRSSLSFNLRQLPTRLTVS), are a transit peptide targeting the chloroplast. One can recognise a Carrier domain in the interval 56 to 131 (PETVDKVCAV…QAAALIEELL (76 aa)). Position 91 is an O-(pantetheine 4'-phosphoryl)serine (Ser-91).

It belongs to the acyl carrier protein (ACP) family. Post-translationally, 4'-phosphopantetheine is transferred from CoA to a specific serine of apo-ACP by acpS. This modification is essential for activity because fatty acids are bound in thioester linkage to the sulfhydryl of the prosthetic group.

Its subcellular location is the plastid. It localises to the chloroplast. Functionally, carrier of the growing fatty acid chain in fatty acid biosynthesis. This chain is Acyl carrier protein 2, chloroplastic (ACP2), found in Arabidopsis thaliana (Mouse-ear cress).